The following is a 308-amino-acid chain: 4-hydroxy-3-methylbut-2-enyl diphosphate reductase (308 aa).

Position 13 (cysteine 13) interacts with [4Fe-4S] cluster. The (2E)-4-hydroxy-3-methylbut-2-enyl diphosphate site is built by histidine 42 and histidine 75. Histidine 42 and histidine 75 together coordinate dimethylallyl diphosphate. Histidine 42 and histidine 75 together coordinate isopentenyl diphosphate. Cysteine 97 provides a ligand contact to [4Fe-4S] cluster. (2E)-4-hydroxy-3-methylbut-2-enyl diphosphate is bound at residue histidine 125. Histidine 125 serves as a coordination point for dimethylallyl diphosphate. Histidine 125 contributes to the isopentenyl diphosphate binding site. Glutamate 127 functions as the Proton donor in the catalytic mechanism. (2E)-4-hydroxy-3-methylbut-2-enyl diphosphate is bound at residue threonine 165. A [4Fe-4S] cluster-binding site is contributed by cysteine 195. Serine 223, serine 224, asparagine 225, and serine 267 together coordinate (2E)-4-hydroxy-3-methylbut-2-enyl diphosphate. Positions 223, 224, 225, and 267 each coordinate dimethylallyl diphosphate. Isopentenyl diphosphate-binding residues include serine 223, serine 224, asparagine 225, and serine 267.

Belongs to the IspH family. [4Fe-4S] cluster serves as cofactor.

The enzyme catalyses isopentenyl diphosphate + 2 oxidized [2Fe-2S]-[ferredoxin] + H2O = (2E)-4-hydroxy-3-methylbut-2-enyl diphosphate + 2 reduced [2Fe-2S]-[ferredoxin] + 2 H(+). The catalysed reaction is dimethylallyl diphosphate + 2 oxidized [2Fe-2S]-[ferredoxin] + H2O = (2E)-4-hydroxy-3-methylbut-2-enyl diphosphate + 2 reduced [2Fe-2S]-[ferredoxin] + 2 H(+). Its pathway is isoprenoid biosynthesis; dimethylallyl diphosphate biosynthesis; dimethylallyl diphosphate from (2E)-4-hydroxy-3-methylbutenyl diphosphate: step 1/1. It functions in the pathway isoprenoid biosynthesis; isopentenyl diphosphate biosynthesis via DXP pathway; isopentenyl diphosphate from 1-deoxy-D-xylulose 5-phosphate: step 6/6. In terms of biological role, catalyzes the conversion of 1-hydroxy-2-methyl-2-(E)-butenyl 4-diphosphate (HMBPP) into a mixture of isopentenyl diphosphate (IPP) and dimethylallyl diphosphate (DMAPP). Acts in the terminal step of the DOXP/MEP pathway for isoprenoid precursor biosynthesis. In Chlamydia muridarum (strain MoPn / Nigg), this protein is 4-hydroxy-3-methylbut-2-enyl diphosphate reductase.